The sequence spans 391 residues: 3-ketoacyl-CoA thiolase (391 aa).

The Acyl-thioester intermediate role is filled by C95. Catalysis depends on proton acceptor residues H347 and C377.

It belongs to the thiolase-like superfamily. Thiolase family. In terms of assembly, heterotetramer of two alpha chains (FadB) and two beta chains (FadA).

It localises to the cytoplasm. It carries out the reaction an acyl-CoA + acetyl-CoA = a 3-oxoacyl-CoA + CoA. Its pathway is lipid metabolism; fatty acid beta-oxidation. Catalyzes the final step of fatty acid oxidation in which acetyl-CoA is released and the CoA ester of a fatty acid two carbons shorter is formed. The polypeptide is 3-ketoacyl-CoA thiolase (Pseudomonas aeruginosa (strain ATCC 15692 / DSM 22644 / CIP 104116 / JCM 14847 / LMG 12228 / 1C / PRS 101 / PAO1)).